Reading from the N-terminus, the 906-residue chain is DNA mismatch repair protein MutS (906 aa).

656–663 lines the ATP pocket; sequence GPNMAGKS.

This sequence belongs to the DNA mismatch repair MutS family.

This protein is involved in the repair of mismatches in DNA. It is possible that it carries out the mismatch recognition step. This protein has a weak ATPase activity. The chain is DNA mismatch repair protein MutS from Rhodopseudomonas palustris (strain BisA53).